Reading from the N-terminus, the 183-residue chain is UPF0200 protein MmarC6_1392 (183 aa).

8–15 (GMPGSGKS) is an ATP binding site.

Belongs to the UPF0200 family.

The chain is UPF0200 protein MmarC6_1392 from Methanococcus maripaludis (strain C6 / ATCC BAA-1332).